Reading from the N-terminus, the 199-residue chain is Lysine exporter LysE (199 aa).

Transmembrane regions (helical) follow at residues 6 to 26 (VVGF…NAFV), 42 to 62 (LCTV…GALI), 68 to 88 (ALNV…LLAA), 144 to 164 (WLFG…LGFG), and 178 to 198 (WRIL…SLTV).

It belongs to the LysE/ArgO transporter (TC 2.A.75) family.

It localises to the cell inner membrane. In terms of biological role, catalyzes the efflux of L-lysine. This Mycobacterium bovis (strain ATCC BAA-935 / AF2122/97) protein is Lysine exporter LysE.